A 667-amino-acid chain; its full sequence is E3 ubiquitin-protein ligase Midline-1 (667 aa).

The segment at 10-60 (CPICLELFEDPLLLPCAHSLCFNCAHRILVSHCATNEPVESINAFQCPTCR) adopts an RING-type zinc-finger fold. 2 positions are modified to phosphoserine: serine 92 and serine 96. B box-type zinc fingers lie at residues 116-165 (KVLC…IEPI) and 172-212 (GLMC…VAAL). Zn(2+)-binding residues include cysteine 119, cysteine 122, cysteine 134, cysteine 137, cysteine 142, cysteine 145, histidine 150, histidine 159, cysteine 175, histidine 178, cysteine 198, and histidine 204. Residues 205–264 (RDHQVAALSERYDKLKQNLESNLTNLIKRNTELETLLAKLIQTCQHVEVNASRQEAKLTE) adopt a coiled-coil conformation. The COS domain occupies 320–379 (LKENDHARFLQTAKNITERVSMATASSQVLIPEINLNDTFDTFALDFSREKKLLECLDYL). The Fibronectin type-III domain maps to 381-484 (APNPPTIREE…EPGKLKTNSQ (104 aa)). Residues 471 to 485 (SRSSEPGKLKTNSQP) show a composition bias toward polar residues. The segment at 471–524 (SRSSEPGKLKTNSQPFKLDPKSAHRKLKVSHDNLTVERDESSSKKSHTPERFTS) is disordered. A B30.2/SPRY domain is found at 482-659 (NSQPFKLDPK…IITGLPIPDH (178 aa)). Basic and acidic residues predominate over residues 499 to 520 (VSHDNLTVERDESSSKKSHTPE). Serine 511 carries the post-translational modification Phosphoserine.

Belongs to the TRIM/RBCC family. Homodimer or heterodimer with MID2. Interacts with IGBP1.

It localises to the cytoplasm. The protein resides in the cytoskeleton. The enzyme catalyses S-ubiquitinyl-[E2 ubiquitin-conjugating enzyme]-L-cysteine + [acceptor protein]-L-lysine = [E2 ubiquitin-conjugating enzyme]-L-cysteine + N(6)-ubiquitinyl-[acceptor protein]-L-lysine.. Its function is as follows. Has E3 ubiquitin ligase activity towards IGBP1, promoting its monoubiquitination, which results in deprotection of the catalytic subunit of protein phosphatase PP2A, and its subsequent degradation by polyubiquitination. In Rattus norvegicus (Rat), this protein is E3 ubiquitin-protein ligase Midline-1 (Mid1).